An 847-amino-acid chain; its full sequence is Ras GTPase-activating protein 2 (847 aa).

Low complexity predominate over residues 1–18 (MAAAAPAAAALTEAPAVP). Residues 1-31 (MAAAAPAAAALTEAPAVPGTAEPETGDEDSR) form a disordered region. Alanine 2 bears the N-acetylalanine mark. C2 domains follow at residues 19-137 (GTAE…ETWF) and 148-288 (VQGK…QAWY). The 218-residue stretch at 371–588 (NKLVPFITAV…TDVKKFLDEI (218 aa)) folds into the Ras-GAP domain. A Phosphoserine modification is found at serine 554. A PH domain is found at 603 to 704 (VHLKEGEMYK…WIDMLCRVSR (102 aa)). Residues 706–742 (NHNRLSSFHPSAYLNGNWLCCQETSEGTPGCKPCTAG) form a Btk-type zinc finger. Residues histidine 714, cysteine 725, cysteine 726, and cysteine 736 each contribute to the Zn(2+) site. The disordered stretch occupies residues 819 to 847 (DEPHEKYRKKRSSSAKYGSKENPIVGKIS).

As to expression, widely expressed. Higher expression in brain, placenta, and kidney.

The protein resides in the cell membrane. Inhibitory regulator of the Ras-cyclic AMP pathway. May bind inositol tetrakisphosphate (IP4) and phospholipids. This chain is Ras GTPase-activating protein 2 (Rasa2), found in Rattus norvegicus (Rat).